Reading from the N-terminus, the 425-residue chain is Caveolae-associated protein 2 (425 aa).

Residues 1-42 form a disordered region; that stretch reads MGEDAAQAEKFQHPGSDMRQEKPSSPSPMPSSTPSPSLNLGN. Glycine 2 carries the post-translational modification N-acetylglycine. Positions 2-168 are interaction with CAVIN1; that stretch reads GEDAAQAEKF…IFQEENEIPA (167 aa). The span at 10–22 shows a compositional bias: basic and acidic residues; the sequence is KFQHPGSDMRQEK. Residues serine 27, serine 35, serine 37, and serine 51 each carry the phosphoserine modification. Coiled coils occupy residues 61-82 and 125-154; these read LLDKLVNMLDAVQENQHKMEQR and TRAVKERMDRQCAQVKRLENNHAQLLRRNH. The leucine-zipper stretch occupies residues 62–100; the sequence is LDKLVNMLDAVQENQHKMEQRQISLEGSVKGIQNDLTKL. Phosphothreonine occurs at positions 196 and 199. Disordered stretches follow at residues 199 to 234 and 271 to 425; these read TVDLSSDDDLPHDEEALEDSAEEKVEESRAEKIKRS and IKKS…HQTS. Residues serine 203, serine 204, and serine 218 each carry the phosphoserine modification. The span at 203–219 shows a compositional bias: acidic residues; the sequence is SSDDDLPHDEEALEDSA. The stretch at 210–268 forms a coiled coil; the sequence is HDEEALEDSAEEKVEESRAEKIKRSSLKKVDSLKKAFSRQNIEKKMNKLGTKIVSVERR. The span at 220–234 shows a compositional bias: basic and acidic residues; that stretch reads EEKVEESRAEKIKRS. Residues 274–287 show a composition bias toward polar residues; sequence SLTSNHQKISSGKS. 5 positions are modified to phosphoserine: serine 283, serine 284, serine 287, serine 288, and serine 293. The segment covering 303–317 has biased composition (basic and acidic residues); sequence REGESHAENETKSED. 4 positions are modified to phosphoserine: serine 332, serine 341, serine 366, and serine 370. Threonine 375 bears the Phosphothreonine mark. Positions 376-385 are enriched in acidic residues; sequence IVEDEEEESV. Position 395 is a phosphotyrosine (tyrosine 395). At serine 403 the chain carries Phosphoserine.

This sequence belongs to the CAVIN family. As to quaternary structure, component of the CAVIN complex composed of CAVIN1, CAVIN2, CAVIN3 and CAVIN4. Binds to PRKCA in the presence of phosphatidylserine. Interacts with CAVIN4; this augments the transactivation of NPPA by CAVIN4. Interacts with CAVIN1. Interacts with CAV3. Post-translationally, phosphorylated on Ser residues. In terms of tissue distribution, highly expressed in heart and lung, and expressed at lower levels in brain, kidney, liver, pancreas, placenta, and skeletal muscle.

The protein resides in the cytoplasm. It is found in the cytosol. It localises to the membrane. The protein localises to the caveola. Plays an important role in caveolar biogenesis and morphology. Regulates caveolae morphology by inducing membrane curvature within caveolae. Plays a role in caveola formation in a tissue-specific manner. Required for the formation of caveolae in the lung and fat endothelia but not in the heart endothelia. Negatively regulates the size or stability of CAVIN complexes in the lung endothelial cells. May play a role in targeting PRKCA to caveolae. This is Caveolae-associated protein 2 from Homo sapiens (Human).